The chain runs to 424 residues: GTPase Obg (424 aa).

The Obg domain maps to 1–158 (MFIDTAKIFV…RWIKLELKLL (158 aa)). Residues 159–331 (ADVGLIGFPN…LMKEAARLLS (173 aa)) enclose the OBG-type G domain. GTP-binding positions include 165–172 (GFPNVGKS), 190–194 (FTTLK), 212–215 (DIPG), 282–285 (NKSD), and 312–314 (SAA). Residues S172 and T192 each contribute to the Mg(2+) site. In terms of domain architecture, OCT spans 345–424 (RFIEEEKRFT…LNDFEFDFLL (80 aa)).

This sequence belongs to the TRAFAC class OBG-HflX-like GTPase superfamily. OBG GTPase family. Monomer. Mg(2+) serves as cofactor.

The protein resides in the cytoplasm. In terms of biological role, an essential GTPase which binds GTP, GDP and possibly (p)ppGpp with moderate affinity, with high nucleotide exchange rates and a fairly low GTP hydrolysis rate. Plays a role in control of the cell cycle, stress response, ribosome biogenesis and in those bacteria that undergo differentiation, in morphogenesis control. The chain is GTPase Obg from Clostridium botulinum (strain Okra / Type B1).